The chain runs to 471 residues: Bifunctional protein GlmU (471 aa).

The interval 1–235 is pyrophosphorylase; sequence MVAVAILAAG…YQEIFGINNR (235 aa). UDP-N-acetyl-alpha-D-glucosamine-binding positions include 7–10, lysine 21, glutamine 82, and 87–88; these read LAAG and GT. Position 112 (aspartate 112) interacts with Mg(2+). Residues glycine 149, glutamate 164, asparagine 179, and asparagine 233 each coordinate UDP-N-acetyl-alpha-D-glucosamine. A Mg(2+)-binding site is contributed by asparagine 233. A linker region spans residues 236 to 256; sequence KHLAKAHEILQVRVKDDWMEA. The tract at residues 257–471 is N-acetyltransferase; that stretch reads GVTLIDPDSI…SKKEENKSSP (215 aa). UDP-N-acetyl-alpha-D-glucosamine contacts are provided by arginine 338 and lysine 356. Catalysis depends on histidine 368, which acts as the Proton acceptor. UDP-N-acetyl-alpha-D-glucosamine contacts are provided by tyrosine 371 and asparagine 382. Residues alanine 385, 391-392, serine 410, alanine 428, and arginine 445 contribute to the acetyl-CoA site; that span reads NY.

This sequence in the N-terminal section; belongs to the N-acetylglucosamine-1-phosphate uridyltransferase family. It in the C-terminal section; belongs to the transferase hexapeptide repeat family. In terms of assembly, homotrimer. Mg(2+) serves as cofactor.

The protein localises to the cytoplasm. The catalysed reaction is alpha-D-glucosamine 1-phosphate + acetyl-CoA = N-acetyl-alpha-D-glucosamine 1-phosphate + CoA + H(+). It catalyses the reaction N-acetyl-alpha-D-glucosamine 1-phosphate + UTP + H(+) = UDP-N-acetyl-alpha-D-glucosamine + diphosphate. Its pathway is nucleotide-sugar biosynthesis; UDP-N-acetyl-alpha-D-glucosamine biosynthesis; N-acetyl-alpha-D-glucosamine 1-phosphate from alpha-D-glucosamine 6-phosphate (route II): step 2/2. It participates in nucleotide-sugar biosynthesis; UDP-N-acetyl-alpha-D-glucosamine biosynthesis; UDP-N-acetyl-alpha-D-glucosamine from N-acetyl-alpha-D-glucosamine 1-phosphate: step 1/1. The protein operates within bacterial outer membrane biogenesis; LPS lipid A biosynthesis. Functionally, catalyzes the last two sequential reactions in the de novo biosynthetic pathway for UDP-N-acetylglucosamine (UDP-GlcNAc). The C-terminal domain catalyzes the transfer of acetyl group from acetyl coenzyme A to glucosamine-1-phosphate (GlcN-1-P) to produce N-acetylglucosamine-1-phosphate (GlcNAc-1-P), which is converted into UDP-GlcNAc by the transfer of uridine 5-monophosphate (from uridine 5-triphosphate), a reaction catalyzed by the N-terminal domain. In Trichodesmium erythraeum (strain IMS101), this protein is Bifunctional protein GlmU.